Here is a 149-residue protein sequence, read N- to C-terminus: Envelope glycoprotein UL4 (149 aa).

The N-terminal stretch at 1 to 18 (MMLRTWISLPMVLLDAYC) is a signal peptide. Residues Asn-46, Asn-51, Asn-59, Asn-67, Asn-105, Asn-109, Asn-119, Asn-136, and Asn-145 are each glycosylated (N-linked (GlcNAc...) asparagine; by host).

This sequence belongs to the RL11 family. In terms of processing, N-glycosylated and possibly O-glycosylated.

The protein localises to the virion membrane. This Human cytomegalovirus (strain Merlin) (HHV-5) protein is Envelope glycoprotein UL4 (UL4).